Reading from the N-terminus, the 179-residue chain is Large ribosomal subunit protein uL5 (179 aa).

The protein belongs to the universal ribosomal protein uL5 family. Part of the 50S ribosomal subunit; part of the 5S rRNA/L5/L18/L25 subcomplex. Contacts the 5S rRNA and the P site tRNA. Forms a bridge to the 30S subunit in the 70S ribosome.

Its function is as follows. This is one of the proteins that bind and probably mediate the attachment of the 5S RNA into the large ribosomal subunit, where it forms part of the central protuberance. In the 70S ribosome it contacts protein S13 of the 30S subunit (bridge B1b), connecting the 2 subunits; this bridge is implicated in subunit movement. Contacts the P site tRNA; the 5S rRNA and some of its associated proteins might help stabilize positioning of ribosome-bound tRNAs. This Geobacter sulfurreducens (strain ATCC 51573 / DSM 12127 / PCA) protein is Large ribosomal subunit protein uL5.